Reading from the N-terminus, the 735-residue chain is MIP-related peptides (735 aa).

An N-terminal signal peptide occupies residues 1–20 (MCTRPGLAALLVLMTSCASS). Positions 21–135 (FSRADTQSAS…EDSDTKVDTR (115 aa)) are excised as a propeptide. Over residues 33–65 (ALSAASADAQAARQQQEQHLVAQQQQQQQQQQQ) the composition is skewed to low complexity. Disordered regions lie at residues 33–212 (ALSA…FGKK) and 229–251 (FGKK…SRGS). Composition is skewed to polar residues over residues 66–76 (HSNNNEPQQRA) and 101–125 (PVSQ…SGTP). F142, F153, and F164 each carry phenylalanine amide. The segment covering 142-159 (FGKKRGQAPRFFGKKRAM) has biased composition (basic residues). Positions 168–184 (SSEFPTSNSEQLALDTR) are excised as a propeptide. Residue F190 is modified to Phenylalanine amide. Positions 194 to 203 (SFPESNREQR) are excised as a propeptide. The segment covering 194–204 (SFPESNREQRG) has biased composition (basic and acidic residues). F209 and F229 each carry phenylalanine amide. Residues 214-229 (FDENVDIDERAAPRFF) constitute a propeptide, linker peptide. Positions 233–249 (SSGESAGDSGYISVASR) are excised as a propeptide. Residue F255 is modified to Phenylalanine amide. A propeptide spans 259 to 267 (QDDDIMIAA) (linker peptide). F274 is subject to Phenylalanine amide. Positions 279 to 287 (SDDNVALDL) are cleaved as a propeptide — linker peptide. Phenylalanine amide is present on F294. The propeptide occupies 298–311 (QSSDLDDEISVALR). Residue F317 is modified to Phenylalanine amide. The propeptide occupies 321-332 (RADDEDILLGER). Residue F338 is modified to Phenylalanine amide. A propeptide spanning residues 342–353 (RANDENISFSLR) is cleaved from the precursor. Disordered stretches follow at residues 352 to 373 (LRGS…DNIG) and 381 to 400 (RFFG…GLMA). F359 carries the post-translational modification Phenylalanine amide. A propeptide spanning residues 363–377 (RSDESDDDNIGLVAR) is cleaved from the precursor. F383 is subject to Phenylalanine amide. The propeptide occupies 387 to 401 (RSDETDDENIGLMAR). A Phenylalanine amide modification is found at F407. The propeptide at 412–426 (SDGLDDGGNIIDVAT) is linker peptide. The interval 430–464 (PRFFGKKRSNSDSSDKSSDSALSSSESGRQTRQAP) is disordered. The residue at position 433 (F433) is a Phenylalanine amide. A propeptide spanning residues 437-461 (RSNSDSSDKSSDSALSSSESGRQTR) is cleaved from the precursor. Over residues 438 to 447 (SNSDSSDKSS) the composition is skewed to basic and acidic residues. Q462 is subject to Pyrrolidone carboxylic acid. F467 carries the phenylalanine amide modification. Residues 471–493 (YVDEHHVSKRAAATAFPLIIEAR) constitute a propeptide that is removed on maturation. Q494 is subject to Pyrrolidone carboxylic acid. A Phenylalanine amide modification is found at F499. Residues 503–509 (EYRYPPR) constitute a propeptide that is removed on maturation. I515 carries the isoleucine amide modification. Positions 519–546 (FSLYRSPGKYSLSSPYMSAKEFKETFRR) are excised as a propeptide. M552 is modified (methionine amide). Positions 556-585 (TAELNEEGSDDFTNDDTDDENEYDETVLFK) are excised as a propeptide. Position 592 is a valine amide (V592). Residue L601 is modified to Leucine amide. Residue I610 is modified to Isoleucine amide. V619 bears the Valine amide mark. I628 is subject to Isoleucine amide. Residues 632–661 (DLDWYQKALCAEADILELDDCADFLGNDDV) constitute a propeptide, linker peptide. Residue Q664 is modified to Pyrrolidone carboxylic acid. An Isoleucine amide modification is found at I669. The propeptide at 674-705 (GEDVSERDYAQLLEALSRLQAIKQIKARIQNE) is linker peptide. The residue at position 714 (V714) is a Valine amide. Positions 715 to 735 (GRRSEYNLGPFDEFVDESMER) are excised as a propeptide.

Expressed in the CNS and peripheral tissues (the digestive tract, vasculature, and the reproductive organs).

It is found in the secreted. Has some structural and functional features similar to vertebrate opioid peptides. AMRPs are inhibitory on Aplysia esophagus, penis retractor muscle, and body wall muscle. This Aplysia californica (California sea hare) protein is MIP-related peptides (MRP).